Consider the following 125-residue polypeptide: Antitoxin MazE5 (125 aa).

As to quaternary structure, forms a complex with cognate toxin MazF5.

In terms of biological role, antitoxin component of a type II toxin-antitoxin (TA) system. Upon expression in M.smegmatis neutralizes the effect of cognate toxin MazF5. This Mycobacterium tuberculosis (strain ATCC 25618 / H37Rv) protein is Antitoxin MazE5 (mazE5).